We begin with the raw amino-acid sequence, 176 residues long: Phosphopantetheine adenylyltransferase (176 aa).

Threonine 11 provides a ligand contact to substrate. ATP-binding positions include threonine 11 to phenylalanine 12 and histidine 19. The substrate site is built by lysine 43, leucine 93, and arginine 107. ATP is bound by residues glutamate 117 and leucine 141–serine 147.

Belongs to the bacterial CoaD family. As to quaternary structure, homohexamer. Mg(2+) serves as cofactor.

Its subcellular location is the cytoplasm. It carries out the reaction (R)-4'-phosphopantetheine + ATP + H(+) = 3'-dephospho-CoA + diphosphate. It functions in the pathway cofactor biosynthesis; coenzyme A biosynthesis; CoA from (R)-pantothenate: step 4/5. In terms of biological role, reversibly transfers an adenylyl group from ATP to 4'-phosphopantetheine, yielding dephospho-CoA (dPCoA) and pyrophosphate. This chain is Phosphopantetheine adenylyltransferase, found in Tropheryma whipplei (strain TW08/27) (Whipple's bacillus).